Reading from the N-terminus, the 166-residue chain is Disulfide bond formation protein B (166 aa).

At 1–11 (MQSFAFSTRAL) the chain is on the cytoplasmic side. A helical membrane pass occupies residues 12–28 (FLGLFAVCAGLLGFGLY). Residues 29–46 (LQHAVGLEPCPMCIMQRY) lie on the Periplasmic side of the membrane. An intrachain disulfide couples Cys38 to Cys41. Residues 47 to 63 (AFVAIALTALVAGLHGP) traverse the membrane as a helical segment. The Cytoplasmic portion of the chain corresponds to 64 to 70 (GRRGTRA). A helical transmembrane segment spans residues 71–87 (YAAVILLLALAGGGVAL). At 88–143 (RQTWMQLYPPEFAECGPDLEFMLGSFPLADALPMIFQGAGDCSKVDWAFLGLSIAN) the chain is on the periplasmic side. A disulfide bridge links Cys102 with Cys129. A helical membrane pass occupies residues 144–162 (WSLVCLTLVAVFAIMMIAR). Residues 163-166 (KRGG) lie on the Cytoplasmic side of the membrane.

The protein belongs to the DsbB family.

It localises to the cell inner membrane. Required for disulfide bond formation in some periplasmic proteins. Acts by oxidizing the DsbA protein. The sequence is that of Disulfide bond formation protein B from Aromatoleum aromaticum (strain DSM 19018 / LMG 30748 / EbN1) (Azoarcus sp. (strain EbN1)).